Here is a 373-residue protein sequence, read N- to C-terminus: Chaperone protein DnaJ (373 aa).

The J domain occupies D5–G70. The CR-type zinc-finger motif lies at G136–K214. Residues C149, C152, C166, C169, C188, C191, C202, and C205 each coordinate Zn(2+). 4 CXXCXGXG motif repeats span residues C149–G156, C166–G173, C188–G195, and C202–G209.

This sequence belongs to the DnaJ family. Homodimer. The cofactor is Zn(2+).

The protein resides in the cytoplasm. Functionally, participates actively in the response to hyperosmotic and heat shock by preventing the aggregation of stress-denatured proteins and by disaggregating proteins, also in an autonomous, DnaK-independent fashion. Unfolded proteins bind initially to DnaJ; upon interaction with the DnaJ-bound protein, DnaK hydrolyzes its bound ATP, resulting in the formation of a stable complex. GrpE releases ADP from DnaK; ATP binding to DnaK triggers the release of the substrate protein, thus completing the reaction cycle. Several rounds of ATP-dependent interactions between DnaJ, DnaK and GrpE are required for fully efficient folding. Also involved, together with DnaK and GrpE, in the DNA replication of plasmids through activation of initiation proteins. This Syntrophotalea carbinolica (strain DSM 2380 / NBRC 103641 / GraBd1) (Pelobacter carbinolicus) protein is Chaperone protein DnaJ.